We begin with the raw amino-acid sequence, 410 residues long: Putative odorant receptor 65c (410 aa).

Residues Met-1 to Ser-59 are Cytoplasmic-facing. A helical membrane pass occupies residues Trp-60–Thr-80. The Extracellular segment spans residues Glu-81–Asp-92. A helical membrane pass occupies residues Ile-93–Gly-113. The Cytoplasmic portion of the chain corresponds to Asp-114 to Thr-148. A helical transmembrane segment spans residues Leu-149–Ile-169. Topologically, residues Thr-170 to Glu-222 are extracellular. A helical transmembrane segment spans residues Gly-223–Leu-243. At Arg-244–Lys-279 the chain is on the cytoplasmic side. Residues Val-280–Val-300 form a helical membrane-spanning segment. Residues Leu-301 to Val-312 are Extracellular-facing. Residues Val-313–Phe-333 traverse the membrane as a helical segment. Residues Gly-334–Ser-385 lie on the Cytoplasmic side of the membrane. Residues Phe-386 to Leu-406 traverse the membrane as a helical segment. The Extracellular portion of the chain corresponds to Lys-407–Asp-410.

Belongs to the insect chemoreceptor superfamily. Heteromeric odorant receptor channel (TC 1.A.69) family. Or49a subfamily. In terms of assembly, interacts with Orco. Complexes exist early in the endomembrane system in olfactory sensory neurons (OSNs), coupling these complexes to the conserved ciliary trafficking pathway.

It localises to the cell membrane. Functionally, odorant receptor which mediates acceptance or avoidance behavior, depending on its substrates. The odorant receptor repertoire encodes a large collection of odor stimuli that vary widely in identity, intensity, and duration. May form a complex with Orco to form odorant-sensing units, providing sensitive and prolonged odorant signaling and calcium permeability. This chain is Putative odorant receptor 65c (Or65c), found in Drosophila melanogaster (Fruit fly).